We begin with the raw amino-acid sequence, 180 residues long: CASP-like protein 2A3 (180 aa).

Topologically, residues Met-1–Trp-13 are cytoplasmic. Residues Ile-14–Leu-34 traverse the membrane as a helical segment. Residues Lys-35–Tyr-55 are Extracellular-facing. The chain crosses the membrane as a helical span at residues Leu-56–Val-76. The Cytoplasmic segment spans residues Pro-77–Ala-85. Residues Trp-86–Val-106 form a helical membrane-spanning segment. The Extracellular portion of the chain corresponds to Thr-107–Arg-135. Residues Val-136–Ile-156 traverse the membrane as a helical segment. Over Ser-157–Ser-180 the chain is Cytoplasmic.

The protein belongs to the Casparian strip membrane proteins (CASP) family. As to quaternary structure, homodimer and heterodimers.

Its subcellular location is the cell membrane. The polypeptide is CASP-like protein 2A3 (Picea sitchensis (Sitka spruce)).